The primary structure comprises 465 residues: ATP synthase subunit beta (465 aa).

Position 152–159 (152–159 (GGAGVGKT)) interacts with ATP.

This sequence belongs to the ATPase alpha/beta chains family. In terms of assembly, F-type ATPases have 2 components, CF(1) - the catalytic core - and CF(0) - the membrane proton channel. CF(1) has five subunits: alpha(3), beta(3), gamma(1), delta(1), epsilon(1). CF(0) has three main subunits: a(1), b(2) and c(9-12). The alpha and beta chains form an alternating ring which encloses part of the gamma chain. CF(1) is attached to CF(0) by a central stalk formed by the gamma and epsilon chains, while a peripheral stalk is formed by the delta and b chains.

Its subcellular location is the cell membrane. The catalysed reaction is ATP + H2O + 4 H(+)(in) = ADP + phosphate + 5 H(+)(out). Produces ATP from ADP in the presence of a proton gradient across the membrane. The catalytic sites are hosted primarily by the beta subunits. This is ATP synthase subunit beta from Desulfitobacterium hafniense (strain Y51).